Here is a 233-residue protein sequence, read N- to C-terminus: MGQKVHPNGMRLGIIKKWNSVWFANTKDFADHLDSDYKVRQFLMKTLEKASISRIIIERPAKSIRVTIYTARPGIVIGKKGEDVEKLRISIAKITGVPVQINISEVRKPELDAKLVSDSITSQLERRVMFRRAMKRSVQNAMRQGAKGIKVEVSGRLGGAEIARREWYREGRVPLHTLRANIDYSISEAHTTYGVIGVKVWIFKGEILGGMETVERLDKPSIQTKKQYRKNRK.

In terms of domain architecture, KH type-2 spans 39–107 (VRQFLMKTLE…PVQINISEVR (69 aa)).

The protein belongs to the universal ribosomal protein uS3 family. Part of the 30S ribosomal subunit. Forms a tight complex with proteins S10 and S14.

In terms of biological role, binds the lower part of the 30S subunit head. Binds mRNA in the 70S ribosome, positioning it for translation. This Buchnera aphidicola subsp. Acyrthosiphon pisum (strain 5A) protein is Small ribosomal subunit protein uS3.